A 222-amino-acid polypeptide reads, in one-letter code: Cytidylate kinase (222 aa).

10-18 contacts ATP; that stretch reads GPSASGKGT.

This sequence belongs to the cytidylate kinase family. Type 1 subfamily.

The protein resides in the cytoplasm. The enzyme catalyses CMP + ATP = CDP + ADP. It catalyses the reaction dCMP + ATP = dCDP + ADP. This chain is Cytidylate kinase, found in Chromobacterium violaceum (strain ATCC 12472 / DSM 30191 / JCM 1249 / CCUG 213 / NBRC 12614 / NCIMB 9131 / NCTC 9757 / MK).